The primary structure comprises 464 residues: MAVYNYDVVVLGSGPAGEGAAMNAAKAGRKVAMVDSRRQVGGNCTHLGTIPSKALRHSVKQIIQFNTNPMFRAIGEPRWFSFPDVLKNAEMVISKQVASRTSYYARNRVDVFFGTGSFADETSVNVVCSNGVVEKLVANQIIIATGSRPYRPADIDFSHKRIYDSDTILSLGHTPRKLIIYGAGVIGCEYASIFSGLGVLVELVDNRDQLLSFLDSEISQALSYHFSNNNVMVRHNEEYERVEGLDNGVILHLKSGKKIKADALLWCNGRTGNTDKLGLENIGLKANGRGQIEVDENYRTSVSNVYGAGDVIGWPSLASAAYDQGRSAAGSMVDNGSWRYVNDVPTGIYTIPEISSIGKNEHELTQAKVPYEVGKAFFKGMARAQISGERVGMLKILFHRETLEVLGVHCFGDQASEIVHIGQAIMSQPGEANTMKYFVNTTFNYPTMAEAYRVAAYDGLNRLF.

Aspartate 35 to cysteine 44 contacts FAD.

The protein belongs to the class-I pyridine nucleotide-disulfide oxidoreductase family. FAD serves as cofactor.

The protein resides in the cytoplasm. The enzyme catalyses NAD(+) + NADPH = NADH + NADP(+). Functionally, conversion of NADPH, generated by peripheral catabolic pathways, to NADH, which can enter the respiratory chain for energy generation. This is Soluble pyridine nucleotide transhydrogenase from Pseudomonas savastanoi pv. phaseolicola (strain 1448A / Race 6) (Pseudomonas syringae pv. phaseolicola (strain 1448A / Race 6)).